Consider the following 383-residue polypeptide: Cell division protein FtsZ (383 aa).

GTP contacts are provided by residues 20 to 24, 107 to 109, E138, R142, and N186; these read GGGGN and GTG.

The protein belongs to the FtsZ family. In terms of assembly, homodimer. Polymerizes to form a dynamic ring structure in a strictly GTP-dependent manner. Interacts directly with several other division proteins.

It localises to the cytoplasm. Its function is as follows. Essential cell division protein that forms a contractile ring structure (Z ring) at the future cell division site. The regulation of the ring assembly controls the timing and the location of cell division. One of the functions of the FtsZ ring is to recruit other cell division proteins to the septum to produce a new cell wall between the dividing cells. Binds GTP and shows GTPase activity. The protein is Cell division protein FtsZ of Escherichia coli O157:H7.